The chain runs to 53 residues: Small, acid-soluble spore protein K (53 aa).

The interval 1–53 (MGRQAEFWSESKNNSKIDGQPKAKARFASKRPNGTINTHPQERMRAANQQEEE) is disordered.

It belongs to the SspK family.

The protein localises to the spore core. The polypeptide is Small, acid-soluble spore protein K (Bacillus cytotoxicus (strain DSM 22905 / CIP 110041 / 391-98 / NVH 391-98)).